A 102-amino-acid chain; its full sequence is Small ribosomal subunit protein uS10 (102 aa).

The protein belongs to the universal ribosomal protein uS10 family. As to quaternary structure, part of the 30S ribosomal subunit.

Its function is as follows. Involved in the binding of tRNA to the ribosomes. This is Small ribosomal subunit protein uS10 from Streptococcus pyogenes serotype M12 (strain MGAS2096).